Reading from the N-terminus, the 69-residue chain is Guanine nucleotide-binding protein G(I)/G(S)/G(O) subunit gamma-T2 (69 aa).

Cys66 is subject to Cysteine methyl ester. Cys66 is lipidated: S-farnesyl cysteine. Positions 67-69 (VLS) are cleaved as a propeptide — removed in mature form.

The protein belongs to the G protein gamma family. As to quaternary structure, g proteins are composed of 3 units, alpha, beta and gamma.

The protein localises to the cell membrane. Guanine nucleotide-binding proteins (G proteins) are involved as a modulator or transducer in various transmembrane signaling systems. The beta and gamma chains are required for the GTPase activity, for replacement of GDP by GTP, and for G protein-effector interaction. This is Guanine nucleotide-binding protein G(I)/G(S)/G(O) subunit gamma-T2 (Gngt2) from Mus musculus (Mouse).